Here is a 29-residue protein sequence, read N- to C-terminus: Chassatide C1 (29 aa).

Positions 1–29 form a cross-link, cyclopeptide (Gly-Asn); sequence GDACGETCFTGICFTAGCSCNPWPTCTRN. Disulfide bonds link Cys4/Cys18, Cys8/Cys20, and Cys13/Cys26.

This is a cyclic peptide. Expressed in leaf, fruit, pedical and stem but not in root (at protein level).

In terms of biological role, probably participates in a plant defense mechanism. The chain is Chassatide C1 from Chassalia chartacea (Chassalia curviflora).